The following is a 151-amino-acid chain: Probable cGMP 3',5'-cyclic phosphodiesterase subunit delta (151 aa).

It belongs to the PDE6D/unc-119 family. As to quaternary structure, interacts with Pde6.

It is found in the nucleus. The protein localises to the cytoplasm. In Drosophila willistoni (Fruit fly), this protein is Probable cGMP 3',5'-cyclic phosphodiesterase subunit delta.